Here is a 193-residue protein sequence, read N- to C-terminus: MKLLEERILKDGHILGDNILKVDSFLTHQVDFSLMREIGKVFAEKFAATGITKVVTIEASGIAPAVFTAEALNVPMIFAKKAKNITMNEGILTAQVYSFTKQVTSTVSIAGKFLSPEDKVLIIDDFLANGQAAKGLIQIIEQAGATVQAIGIVIEKSFQDGRDLLEKAGYPVLSLARLDRFENGQVVFKEADL.

The xanthine site is built by Leu20 and Thr27. 128–132 provides a ligand contact to 5-phospho-alpha-D-ribose 1-diphosphate; the sequence is ANGQA. Lys156 serves as a coordination point for xanthine.

The protein belongs to the purine/pyrimidine phosphoribosyltransferase family. Xpt subfamily. As to quaternary structure, homodimer.

It localises to the cytoplasm. It carries out the reaction XMP + diphosphate = xanthine + 5-phospho-alpha-D-ribose 1-diphosphate. Its pathway is purine metabolism; XMP biosynthesis via salvage pathway; XMP from xanthine: step 1/1. Its function is as follows. Converts the preformed base xanthine, a product of nucleic acid breakdown, to xanthosine 5'-monophosphate (XMP), so it can be reused for RNA or DNA synthesis. This Streptococcus pneumoniae serotype 19F (strain G54) protein is Xanthine phosphoribosyltransferase.